The following is a 335-amino-acid chain: Serine protease 42 (335 aa).

The signal sequence occupies residues 1-24 (MASGGGSLGLIVFLLLLQPKPCEA). An N-linked (GlcNAc...) asparagine glycan is attached at Asn67. In terms of domain architecture, Peptidase S1 spans 79–315 (IMGGVDAEEG…YSKWLIAVVN (237 aa)). Cysteines 104 and 120 form a disulfide. His119 (charge relay system) is an active-site residue. An N-linked (GlcNAc...) asparagine glycan is attached at Asn140. Asp165 functions as the Charge relay system in the catalytic mechanism. Asn176 is a glycosylation site (N-linked (GlcNAc...) asparagine). 3 disulfides stabilise this stretch: Cys199–Cys273, Cys232–Cys253, and Cys263–Cys291. Ser267 acts as the Charge relay system in catalysis.

Belongs to the peptidase S1 family. In terms of tissue distribution, testis-specific. Mainly detected in round spermatids at all the eminiferous epithelial stages (at protein level).

It localises to the cytoplasm. Its subcellular location is the cell membrane. Functionally, plays a role in spermatogenesis. Involved in germ cell survival during meiosis. Lacks protease activity in vitro. This is Serine protease 42 from Mus musculus (Mouse).